We begin with the raw amino-acid sequence, 281 residues long: 3-hydroxyanthranilate 3,4-dioxygenase (281 aa).

The interval Met1–Gly162 is domain A (catalytic). Arg45 contributes to the O2 binding site. Residues His49, Glu55, and His93 each contribute to the Fe cation site. Glu55 contributes to the substrate binding site. Substrate contacts are provided by Arg97 and Glu107. Residues Lys163–Leu179 are linker. Residues Pro180 to Ala281 are domain B.

Belongs to the 3-HAO family. Fe(2+) is required as a cofactor.

It localises to the cytoplasm. It carries out the reaction 3-hydroxyanthranilate + O2 = (2Z,4Z)-2-amino-3-carboxymuconate 6-semialdehyde. It participates in cofactor biosynthesis; NAD(+) biosynthesis; quinolinate from L-kynurenine: step 3/3. Its function is as follows. Catalyzes the oxidative ring opening of 3-hydroxyanthranilate to 2-amino-3-carboxymuconate semialdehyde, which spontaneously cyclizes to quinolinate. The protein is 3-hydroxyanthranilate 3,4-dioxygenase (haao-1) of Caenorhabditis elegans.